We begin with the raw amino-acid sequence, 444 residues long: Maintenance of mitochondrial morphology protein 1 (444 aa).

The span at 1-16 (MKGVENTLSQSESVNR) shows a compositional bias: polar residues. A disordered region spans residues 1-20 (MKGVENTLSQSESVNRGYNG). The Lumenal portion of the chain corresponds to 1–107 (MKGVENTLSQ…TFSSRSFAEG (107 aa)). The helical transmembrane segment at 108–128 (LVVGQLSVIVVLIFFIKFFIF) threads the bilayer. Over 129–444 (SDGPAKTGGG…QEEDPSRAPE (316 aa)) the chain is Cytoplasmic. The disordered stretch occupies residues 136–157 (GGGGGSSAESRSSGFTGSPLTS). Over residues 142-157 (SAESRSSGFTGSPLTS) the composition is skewed to low complexity. Residues 204–418 (SPESLDWFNV…EPRFQFVKLP (215 aa)) form the SMP-LTD domain. The segment at 425-444 (KNTREEKSDMQEEDPSRAPE) is disordered. Positions 426 to 444 (NTREEKSDMQEEDPSRAPE) are enriched in basic and acidic residues.

This sequence belongs to the MMM1 family. In terms of assembly, homodimer. Component of the ER-mitochondria encounter structure (ERMES) or MDM complex, composed of MMM1, MDM10, MDM12 and MDM34. An MMM1 homodimer associates with one molecule of MDM12 on each side in a pairwise head-to-tail manner, and the SMP-LTD domains of MMM1 and MDM12 generate a continuous hydrophobic tunnel for phospholipid trafficking.

The protein localises to the endoplasmic reticulum membrane. Functionally, component of the ERMES/MDM complex, which serves as a molecular tether to connect the endoplasmic reticulum (ER) and mitochondria. Components of this complex are involved in the control of mitochondrial shape and protein biogenesis, and function in nonvesicular lipid trafficking between the ER and mitochondria. The MDM12-MMM1 subcomplex functions in the major beta-barrel assembly pathway that is responsible for biogenesis of all outer membrane beta-barrel proteins, and acts in a late step after the SAM complex. The MDM10-MDM12-MMM1 subcomplex further acts in the TOM40-specific pathway after the action of the MDM12-MMM1 complex. Essential for establishing and maintaining the structure of mitochondria and maintenance of mtDNA nucleoids. The chain is Maintenance of mitochondrial morphology protein 1 from Eremothecium gossypii (strain ATCC 10895 / CBS 109.51 / FGSC 9923 / NRRL Y-1056) (Yeast).